Here is an 84-residue protein sequence, read N- to C-terminus: Small ribosomal subunit protein eS27 (84 aa).

Residues 1–16 are compositionally biased toward basic and acidic residues; it reads MPLAKDLLHPSPEEEK. Positions 1-23 are disordered; that stretch reads MPLAKDLLHPSPEEEKRKHKKKR. Ser-11 bears the Phosphoserine mark. The C4-type zinc-finger motif lies at 38–60; it reads PGCYKITTVFSHAQTVVLCVGCS.

It belongs to the eukaryotic ribosomal protein eS27 family. In terms of assembly, component of the small ribosomal subunit. Part of the small subunit (SSU) processome, composed of more than 70 proteins and the RNA chaperone small nucleolar RNA (snoRNA) U3. Requires Zn(2+) as cofactor.

The protein resides in the cytoplasm. It localises to the nucleus. The protein localises to the nucleolus. Its function is as follows. Component of the small ribosomal subunit. The ribosome is a large ribonucleoprotein complex responsible for the synthesis of proteins in the cell. Required for proper rRNA processing and maturation of 18S rRNAs. Part of the small subunit (SSU) processome, first precursor of the small eukaryotic ribosomal subunit. During the assembly of the SSU processome in the nucleolus, many ribosome biogenesis factors, an RNA chaperone and ribosomal proteins associate with the nascent pre-rRNA and work in concert to generate RNA folding, modifications, rearrangements and cleavage as well as targeted degradation of pre-ribosomal RNA by the RNA exosome. The chain is Small ribosomal subunit protein eS27 from Mus musculus (Mouse).